The primary structure comprises 196 residues: V-type proton ATPase subunit E (196 aa).

The protein belongs to the V-ATPase E subunit family.

Its function is as follows. Produces ATP from ADP in the presence of a proton gradient across the membrane. This Clostridium botulinum (strain Alaska E43 / Type E3) protein is V-type proton ATPase subunit E.